Here is a 435-residue protein sequence, read N- to C-terminus: 3-ketoacyl-CoA thiolase (435 aa).

C98 (acyl-thioester intermediate) is an active-site residue. Active-site proton acceptor residues include H391 and C421.

The protein belongs to the thiolase-like superfamily. Thiolase family. As to quaternary structure, heterotetramer of two alpha chains (FadJ) and two beta chains (FadI).

It is found in the cytoplasm. The enzyme catalyses an acyl-CoA + acetyl-CoA = a 3-oxoacyl-CoA + CoA. Its pathway is lipid metabolism; fatty acid beta-oxidation. Functionally, catalyzes the final step of fatty acid oxidation in which acetyl-CoA is released and the CoA ester of a fatty acid two carbons shorter is formed. This Colwellia psychrerythraea (strain 34H / ATCC BAA-681) (Vibrio psychroerythus) protein is 3-ketoacyl-CoA thiolase.